Reading from the N-terminus, the 403-residue chain is Probable eukaryotic initiation factor 4A (403 aa).

The disordered stretch occupies residues 1–29; that stretch reads MSQQDRVAPQDQDSFLDDQPGVRPIPSFD. Positions 26 to 54 match the Q motif motif; that stretch reads PSFDDMPLHQNLLRGIYSYGFEKPSSIQQ. Residues 57-230 form the Helicase ATP-binding domain; the sequence is IAPFTRGGDI…KKFMRDPVRI (174 aa). Position 70–77 (70–77) interacts with ATP; the sequence is AQSGTGKT. The DEAD box signature appears at 178–181; sequence DEAD. Positions 241–401 constitute a Helicase C-terminal domain; sequence GIKQFFIAVE…ELPVDFAAYL (161 aa).

It belongs to the DEAD box helicase family. eIF4A subfamily. As to quaternary structure, eIF4F is a multi-subunit complex, the composition of which varies with external and internal environmental conditions. It is composed of at least EIF4A, EIF4E and EIF4G.

It catalyses the reaction ATP + H2O = ADP + phosphate + H(+). Functionally, ATP-dependent RNA helicase which is a subunit of the eIF4F complex involved in cap recognition and is required for mRNA binding to ribosome. In the current model of translation initiation, eIF4A unwinds RNA secondary structures in the 5'-UTR of mRNAs which is necessary to allow efficient binding of the small ribosomal subunit, and subsequent scanning for the initiator codon. This is Probable eukaryotic initiation factor 4A from Leishmania braziliensis.